The sequence spans 303 residues: Polyisoprenyl-teichoic acid--peptidoglycan teichoic acid transferase TagU (303 aa).

Over methionine 1–lysine 6 the chain is Cytoplasmic. A helical; Signal-anchor for type II membrane protein membrane pass occupies residues isoleucine 7–alanine 27. The Extracellular portion of the chain corresponds to lysine 28–lysine 303.

It belongs to the LytR/CpsA/Psr (LCP) family.

It localises to the cell membrane. Its pathway is cell wall biogenesis. May catalyze the final step in cell wall teichoic acid biosynthesis, the transfer of the anionic cell wall polymers (APs) from their lipid-linked precursor to the cell wall peptidoglycan (PG). The polypeptide is Polyisoprenyl-teichoic acid--peptidoglycan teichoic acid transferase TagU (Enterococcus faecalis (strain ATCC 700802 / V583)).